The primary structure comprises 490 residues: Protein nucleotidyltransferase YdiU (490 aa).

ATP is bound by residues G89, G91, R92, K112, D124, G125, R175, and R182. D251 serves as the catalytic Proton acceptor. Mg(2+) contacts are provided by N252 and D261. D261 is a binding site for ATP.

It belongs to the SELO family. Mg(2+) is required as a cofactor. The cofactor is Mn(2+).

The catalysed reaction is L-seryl-[protein] + ATP = 3-O-(5'-adenylyl)-L-seryl-[protein] + diphosphate. It catalyses the reaction L-threonyl-[protein] + ATP = 3-O-(5'-adenylyl)-L-threonyl-[protein] + diphosphate. The enzyme catalyses L-tyrosyl-[protein] + ATP = O-(5'-adenylyl)-L-tyrosyl-[protein] + diphosphate. It carries out the reaction L-histidyl-[protein] + UTP = N(tele)-(5'-uridylyl)-L-histidyl-[protein] + diphosphate. The catalysed reaction is L-seryl-[protein] + UTP = O-(5'-uridylyl)-L-seryl-[protein] + diphosphate. It catalyses the reaction L-tyrosyl-[protein] + UTP = O-(5'-uridylyl)-L-tyrosyl-[protein] + diphosphate. Nucleotidyltransferase involved in the post-translational modification of proteins. It can catalyze the addition of adenosine monophosphate (AMP) or uridine monophosphate (UMP) to a protein, resulting in modifications known as AMPylation and UMPylation. The polypeptide is Protein nucleotidyltransferase YdiU (Vibrio vulnificus (strain YJ016)).